The chain runs to 692 residues: E3 ubiquitin-protein ligase brl1 (692 aa).

The stretch at 302-370 forms a coiled coil; the sequence is SNEEKIESIN…RNERDSLVAK (69 aa). The RING-type zinc-finger motif lies at 639-679; sequence CSVCNFSNWKSKLIPNCGHAFCSNCMEPFYEHKTSTCPQCE.

It belongs to the BRE1 family. In terms of assembly, component of the histone H2B ubiquitin ligase complex (HULC) composed of at least brl1, brl2, rhp6 and shf1.

It is found in the nucleus. It carries out the reaction S-ubiquitinyl-[E2 ubiquitin-conjugating enzyme]-L-cysteine + [acceptor protein]-L-lysine = [E2 ubiquitin-conjugating enzyme]-L-cysteine + N(6)-ubiquitinyl-[acceptor protein]-L-lysine.. Its pathway is protein modification; protein ubiquitination. E3 ubiquitin-protein ligase which belongs to the histone H2B ubiquitin ligase complex (HULC) which mediates monoubiquitination of histone H2B to form H2BK123ub1. H2BK123ub1 gives a specific tag for epigenetic transcriptional activation and is also a prerequisite for H3K4me and H3K79me formation. This Schizosaccharomyces pombe (strain 972 / ATCC 24843) (Fission yeast) protein is E3 ubiquitin-protein ligase brl1 (brl1).